The sequence spans 126 residues: Small ribosomal subunit protein uS13 (126 aa).

The disordered stretch occupies residues 91–126 (HRAGLPVRGQRTRTNSRTRRSAKRTVAGKKKAPSKK). Basic residues predominate over residues 100–126 (QRTRTNSRTRRSAKRTVAGKKKAPSKK).

It belongs to the universal ribosomal protein uS13 family. As to quaternary structure, part of the 30S ribosomal subunit. Forms a loose heterodimer with protein S19. Forms two bridges to the 50S subunit in the 70S ribosome.

Its function is as follows. Located at the top of the head of the 30S subunit, it contacts several helices of the 16S rRNA. In the 70S ribosome it contacts the 23S rRNA (bridge B1a) and protein L5 of the 50S subunit (bridge B1b), connecting the 2 subunits; these bridges are implicated in subunit movement. Contacts the tRNAs in the A and P-sites. The polypeptide is Small ribosomal subunit protein uS13 (Acaryochloris marina (strain MBIC 11017)).